Here is a 109-residue protein sequence, read N- to C-terminus: Large ribosomal subunit protein uL22 (109 aa).

Belongs to the universal ribosomal protein uL22 family. Part of the 50S ribosomal subunit.

Functionally, this protein binds specifically to 23S rRNA; its binding is stimulated by other ribosomal proteins, e.g. L4, L17, and L20. It is important during the early stages of 50S assembly. It makes multiple contacts with different domains of the 23S rRNA in the assembled 50S subunit and ribosome. Its function is as follows. The globular domain of the protein is located near the polypeptide exit tunnel on the outside of the subunit, while an extended beta-hairpin is found that lines the wall of the exit tunnel in the center of the 70S ribosome. This Bordetella avium (strain 197N) protein is Large ribosomal subunit protein uL22.